The sequence spans 279 residues: UPF0276 protein SO_2008 (279 aa).

The protein belongs to the UPF0276 family.

The chain is UPF0276 protein SO_2008 from Shewanella oneidensis (strain ATCC 700550 / JCM 31522 / CIP 106686 / LMG 19005 / NCIMB 14063 / MR-1).